The primary structure comprises 668 residues: SH2 domain-containing protein B (668 aa).

Positions 373 to 411 are disordered; the sequence is SVSGSEESYQQCNSHPQTSRQFENGNGMRLHEEDNSSID. Positions 374-396 are enriched in polar residues; it reads VSGSEESYQQCNSHPQTSRQFEN. Residues 574–642 form the SH2 domain; sequence WIEGFITKEE…DNICESSERY (69 aa).

Phosphorylated on tyrosine residues. Expressed in roots, leaves, stems and flowers.

The polypeptide is SH2 domain-containing protein B (Arabidopsis thaliana (Mouse-ear cress)).